A 264-amino-acid polypeptide reads, in one-letter code: Diphthine synthase (264 aa).

S-adenosyl-L-methionine is bound by residues leucine 10, aspartate 87, valine 90, 115-116 (SI), leucine 166, alanine 209, and histidine 234.

It belongs to the diphthine synthase family. In terms of assembly, homodimer.

The catalysed reaction is 2-[(3S)-amino-3-carboxypropyl]-L-histidyl-[translation elongation factor 2] + 3 S-adenosyl-L-methionine = diphthine-[translation elongation factor 2] + 3 S-adenosyl-L-homocysteine + 3 H(+). Its pathway is protein modification; peptidyl-diphthamide biosynthesis. S-adenosyl-L-methionine-dependent methyltransferase that catalyzes the trimethylation of the amino group of the modified target histidine residue in translation elongation factor 2 (EF-2), to form an intermediate called diphthine. The three successive methylation reactions represent the second step of diphthamide biosynthesis. In Thermococcus onnurineus (strain NA1), this protein is Diphthine synthase.